The sequence spans 383 residues: Acetylornithine deacetylase (383 aa).

His-80 provides a ligand contact to Zn(2+). The active site involves Asp-82. Residue Asp-112 coordinates Zn(2+). Residue Glu-144 is part of the active site. Glu-145, Glu-169, and His-355 together coordinate Zn(2+).

This sequence belongs to the peptidase M20A family. ArgE subfamily. As to quaternary structure, homodimer. The cofactor is Zn(2+). It depends on Co(2+) as a cofactor. Glutathione is required as a cofactor.

The protein resides in the cytoplasm. It carries out the reaction N(2)-acetyl-L-ornithine + H2O = L-ornithine + acetate. It functions in the pathway amino-acid biosynthesis; L-arginine biosynthesis; L-ornithine from N(2)-acetyl-L-ornithine (linear): step 1/1. Its function is as follows. Catalyzes the hydrolysis of the amide bond of N(2)-acetylated L-amino acids. Cleaves the acetyl group from N-acetyl-L-ornithine to form L-ornithine, an intermediate in L-arginine biosynthesis pathway, and a branchpoint in the synthesis of polyamines. This chain is Acetylornithine deacetylase, found in Escherichia coli O127:H6 (strain E2348/69 / EPEC).